Reading from the N-terminus, the 262-residue chain is Imidazole glycerol phosphate synthase subunit HisF (262 aa).

Active-site residues include Asp-11 and Asp-130.

Belongs to the HisA/HisF family. As to quaternary structure, heterodimer of HisH and HisF.

Its subcellular location is the cytoplasm. The enzyme catalyses 5-[(5-phospho-1-deoxy-D-ribulos-1-ylimino)methylamino]-1-(5-phospho-beta-D-ribosyl)imidazole-4-carboxamide + L-glutamine = D-erythro-1-(imidazol-4-yl)glycerol 3-phosphate + 5-amino-1-(5-phospho-beta-D-ribosyl)imidazole-4-carboxamide + L-glutamate + H(+). Its pathway is amino-acid biosynthesis; L-histidine biosynthesis; L-histidine from 5-phospho-alpha-D-ribose 1-diphosphate: step 5/9. Its function is as follows. IGPS catalyzes the conversion of PRFAR and glutamine to IGP, AICAR and glutamate. The HisF subunit catalyzes the cyclization activity that produces IGP and AICAR from PRFAR using the ammonia provided by the HisH subunit. The protein is Imidazole glycerol phosphate synthase subunit HisF of Rhodopirellula baltica (strain DSM 10527 / NCIMB 13988 / SH1).